A 494-amino-acid chain; its full sequence is Glutamate--tRNA ligase (494 aa).

The short motif at 9–19 is the 'HIGH' region element; the sequence is PSPTGDPHVGT. Positions 250 to 254 match the 'KMSKS' region motif; sequence KLSKR. Lysine 253 lines the ATP pocket.

It belongs to the class-I aminoacyl-tRNA synthetase family. Glutamate--tRNA ligase type 1 subfamily. As to quaternary structure, monomer.

Its subcellular location is the cytoplasm. The enzyme catalyses tRNA(Glu) + L-glutamate + ATP = L-glutamyl-tRNA(Glu) + AMP + diphosphate. In terms of biological role, catalyzes the attachment of glutamate to tRNA(Glu) in a two-step reaction: glutamate is first activated by ATP to form Glu-AMP and then transferred to the acceptor end of tRNA(Glu). This is Glutamate--tRNA ligase from Alcanivorax borkumensis (strain ATCC 700651 / DSM 11573 / NCIMB 13689 / SK2).